The primary structure comprises 248 residues: Large ribosomal subunit protein uL30 (248 aa).

The disordered stretch occupies residues 22-42; sequence KSQEKARAERQAEIEKKKAAN. Over residues 24 to 42 the composition is skewed to basic and acidic residues; that stretch reads QEKARAERQAEIEKKKAAN.

It belongs to the universal ribosomal protein uL30 family. As to quaternary structure, component of the large ribosomal subunit (LSU). Mature N.crassa ribosomes consist of a small (40S) and a large (60S) subunit. The 40S small subunit contains 1 molecule of ribosomal RNA (18S rRNA) and at least 32 different proteins. The large 60S subunit contains 3 rRNA molecules (26S, 5.8S and 5S rRNA) and at least 42 different proteins.

The protein resides in the cytoplasm. Component of the ribosome, a large ribonucleoprotein complex responsible for the synthesis of proteins in the cell. The small ribosomal subunit (SSU) binds messenger RNAs (mRNAs) and translates the encoded message by selecting cognate aminoacyl-transfer RNA (tRNA) molecules. The large subunit (LSU) contains the ribosomal catalytic site termed the peptidyl transferase center (PTC), which catalyzes the formation of peptide bonds, thereby polymerizing the amino acids delivered by tRNAs into a polypeptide chain. The nascent polypeptides leave the ribosome through a tunnel in the LSU and interact with protein factors that function in enzymatic processing, targeting, and the membrane insertion of nascent chains at the exit of the ribosomal tunnel. This is Large ribosomal subunit protein uL30 (rpl-7) from Neurospora crassa (strain ATCC 24698 / 74-OR23-1A / CBS 708.71 / DSM 1257 / FGSC 987).